The chain runs to 382 residues: 6-oxocyclohex-1-ene-1-carbonyl-CoA hydrolase (382 aa).

This sequence belongs to the enoyl-CoA hydratase/isomerase family. Homohexamer.

The catalysed reaction is 6-oxocyclohex-1-ene-1-carbonyl-CoA + 2 H2O = 3-hydroxy-6-carboxyhexanoyl-CoA + H(+). The protein operates within aromatic compound metabolism; benzoyl-CoA degradation. Involved in the central benzoyl-CoA catabolism. Catalyzes the addition of one molecule of water to the double bond and the hydrolytic cleavage of C-C bond in the alicyclic ring, 6-oxocyclohex-1-ene-1-carbonyl-CoA (6-OCH-CoA) to yield 3-hydroxypimelyl-CoA. The sequence is that of 6-oxocyclohex-1-ene-1-carbonyl-CoA hydrolase from Syntrophus aciditrophicus (strain SB).